The chain runs to 520 residues: Keratin, type II cytoskeletal 78 (520 aa).

The interval 1–110 (MSLSPCRAQR…DPQFQVVRTQ (110 aa)) is head. The interval 111–146 (ETQEIRTLNNQFASFIDKVRFLEQQNKVLETKWHLL) is coil 1A. In terms of domain architecture, IF rod spans 111-424 (ETQEIRTLNN…RLLEGEECRM (314 aa)). The linker 1 stretch occupies residues 147-165 (QQQGLSGSQQGLEPVFEAC). A coil 1B region spans residues 166-258 (LDQLRKQLEQ…LNEEELGQLQ (93 aa)). The interval 259-281 (TQASDTSVVLSMDNNRYLDFSSI) is linker 12. The coil 2 stretch occupies residues 282-421 (ITEVRARYEE…TYRRLLEGEE (140 aa)). A tail region spans residues 422–520 (CRMSGECTSQ…ESSLKTSITY (99 aa)).

It belongs to the intermediate filament family. As to quaternary structure, heterotetramer of two type I and two type II keratins. In terms of tissue distribution, in non-keratinising esophageal and vaginal epithelium, strongly expressed in the basal and parabasal/lower suprabasal cell layers with considerably decreased expression in the mid/upper suprabasal layers (at protein level). A similar gradient from basal to lower suprabasal layers is seen in the partially keratinised dorsal tongue epithelium, in the scalp and in the plantar epidermis (at protein level). Extension of expression into the suprabasal compartments is distinctly more pronounced in non-keratinising epithelia than in keratinising epithelia and epidermis (at protein level). In scalp sections, present in the interfollicular epidermis and infundibulum including the entire outer root sheath of the hair follicles and also in the sebocytes (at protein level). In sweat glands, expressed in peripheral and luminal cells of the lower duct and in peripheral cells of the middle/upper duct with no expression observed in luminal cells (at protein level). In embryos at the 14th week of pregnancy, detected in basal and parabasal layers but is absent from the uppermost epidermal layer (at protein level). Expressed in tongue epithelium.

This is Keratin, type II cytoskeletal 78 (KRT78) from Homo sapiens (Human).